The sequence spans 333 residues: Adenosine deaminase (333 aa).

2 residues coordinate Zn(2+): His12 and His14. Substrate is bound by residues His14, Asp16, and Gly170. His197 contacts Zn(2+). Glu200 (proton donor) is an active-site residue. Asp278 serves as a coordination point for Zn(2+). Asp279 provides a ligand contact to substrate.

The protein belongs to the metallo-dependent hydrolases superfamily. Adenosine and AMP deaminases family. Adenosine deaminase subfamily. It depends on Zn(2+) as a cofactor.

The enzyme catalyses adenosine + H2O + H(+) = inosine + NH4(+). The catalysed reaction is 2'-deoxyadenosine + H2O + H(+) = 2'-deoxyinosine + NH4(+). Its function is as follows. Catalyzes the hydrolytic deamination of adenosine and 2-deoxyadenosine. The polypeptide is Adenosine deaminase (Escherichia coli O157:H7).